Consider the following 373-residue polypeptide: Phospho-N-acetylmuramoyl-pentapeptide-transferase (373 aa).

10 helical membrane passes run 28 to 48 (LLTVITSLAFSIILGPRTIAY), 72 to 92 (TPTMGGVLILTSIGFSTLCWA), 94 to 114 (LANPYVWILMVVMVIFGAVGW), 135 to 155 (YFWLSVGALFVGSSLYYIASQ), 177 to 197 (IVPLSALPLGLGFIIFTYFVI), 212 to 232 (GLAILPVVFVAAGLGVFSYVS), 252 to 272 (VTIVCAAMIGSGLGFLWYNAH), 276 to 296 (VFMGDVGALALGAMLGTIAVM), 301 to 321 (IAFAIMGGLFVAEALSVILQV), and 350 to 370 (QVVVRFWIIAILLVVLGLMTL).

The protein belongs to the glycosyltransferase 4 family. MraY subfamily. Requires Mg(2+) as cofactor.

The protein resides in the cell inner membrane. The enzyme catalyses UDP-N-acetyl-alpha-D-muramoyl-L-alanyl-gamma-D-glutamyl-meso-2,6-diaminopimeloyl-D-alanyl-D-alanine + di-trans,octa-cis-undecaprenyl phosphate = di-trans,octa-cis-undecaprenyl diphospho-N-acetyl-alpha-D-muramoyl-L-alanyl-D-glutamyl-meso-2,6-diaminopimeloyl-D-alanyl-D-alanine + UMP. It participates in cell wall biogenesis; peptidoglycan biosynthesis. Functionally, catalyzes the initial step of the lipid cycle reactions in the biosynthesis of the cell wall peptidoglycan: transfers peptidoglycan precursor phospho-MurNAc-pentapeptide from UDP-MurNAc-pentapeptide onto the lipid carrier undecaprenyl phosphate, yielding undecaprenyl-pyrophosphoryl-MurNAc-pentapeptide, known as lipid I. This chain is Phospho-N-acetylmuramoyl-pentapeptide-transferase, found in Psychrobacter sp. (strain PRwf-1).